Reading from the N-terminus, the 550-residue chain is Chaperonin GroEL (550 aa).

ATP is bound by residues Thr30–Pro33, Lys51, Asp87–Thr91, Gly415, and Asp497.

It belongs to the chaperonin (HSP60) family. As to quaternary structure, forms a cylinder of 14 subunits composed of two heptameric rings stacked back-to-back. Interacts with the co-chaperonin GroES.

It localises to the cytoplasm. It catalyses the reaction ATP + H2O + a folded polypeptide = ADP + phosphate + an unfolded polypeptide.. In terms of biological role, together with its co-chaperonin GroES, plays an essential role in assisting protein folding. The GroEL-GroES system forms a nano-cage that allows encapsulation of the non-native substrate proteins and provides a physical environment optimized to promote and accelerate protein folding. This chain is Chaperonin GroEL, found in Yersinia enterocolitica.